Here is a 575-residue protein sequence, read N- to C-terminus: Dihydroxy-acid dehydratase (575 aa).

The segment at 1-27 (MSNQERQERPEKDPDLRSTEVTEGYEK) is disordered. Cysteine 61 lines the [2Fe-2S] cluster pocket. Aspartate 93 is a Mg(2+) binding site. Cysteine 134 is a binding site for [2Fe-2S] cluster. 2 residues coordinate Mg(2+): aspartate 135 and lysine 136. Lysine 136 is subject to N6-carboxylysine. [2Fe-2S] cluster is bound at residue cysteine 206. Glutamate 460 lines the Mg(2+) pocket. The Proton acceptor role is filled by serine 486.

It belongs to the IlvD/Edd family. Homodimer. The cofactor is [2Fe-2S] cluster. It depends on Mg(2+) as a cofactor.

It carries out the reaction (2R)-2,3-dihydroxy-3-methylbutanoate = 3-methyl-2-oxobutanoate + H2O. It catalyses the reaction (2R,3R)-2,3-dihydroxy-3-methylpentanoate = (S)-3-methyl-2-oxopentanoate + H2O. It functions in the pathway amino-acid biosynthesis; L-isoleucine biosynthesis; L-isoleucine from 2-oxobutanoate: step 3/4. It participates in amino-acid biosynthesis; L-valine biosynthesis; L-valine from pyruvate: step 3/4. In terms of biological role, functions in the biosynthesis of branched-chain amino acids. Catalyzes the dehydration of (2R,3R)-2,3-dihydroxy-3-methylpentanoate (2,3-dihydroxy-3-methylvalerate) into 2-oxo-3-methylpentanoate (2-oxo-3-methylvalerate) and of (2R)-2,3-dihydroxy-3-methylbutanoate (2,3-dihydroxyisovalerate) into 2-oxo-3-methylbutanoate (2-oxoisovalerate), the penultimate precursor to L-isoleucine and L-valine, respectively. The chain is Dihydroxy-acid dehydratase from Haloarcula marismortui (strain ATCC 43049 / DSM 3752 / JCM 8966 / VKM B-1809) (Halobacterium marismortui).